Here is a 234-residue protein sequence, read N- to C-terminus: 2-C-methyl-D-erythritol 4-phosphate cytidylyltransferase (234 aa).

This sequence belongs to the IspD/TarI cytidylyltransferase family. IspD subfamily.

The catalysed reaction is 2-C-methyl-D-erythritol 4-phosphate + CTP + H(+) = 4-CDP-2-C-methyl-D-erythritol + diphosphate. It functions in the pathway isoprenoid biosynthesis; isopentenyl diphosphate biosynthesis via DXP pathway; isopentenyl diphosphate from 1-deoxy-D-xylulose 5-phosphate: step 2/6. In terms of biological role, catalyzes the formation of 4-diphosphocytidyl-2-C-methyl-D-erythritol from CTP and 2-C-methyl-D-erythritol 4-phosphate (MEP). In Shewanella sediminis (strain HAW-EB3), this protein is 2-C-methyl-D-erythritol 4-phosphate cytidylyltransferase.